The chain runs to 275 residues: Trans-aconitate 2-methyltransferase (275 aa).

It belongs to the methyltransferase superfamily. Tam family.

The protein resides in the cytoplasm. It carries out the reaction trans-aconitate + S-adenosyl-L-methionine = (E)-3-(methoxycarbonyl)pent-2-enedioate + S-adenosyl-L-homocysteine. Functionally, catalyzes the S-adenosylmethionine monomethyl esterification of trans-aconitate. The sequence is that of Trans-aconitate 2-methyltransferase from Pseudomonas aeruginosa (strain UCBPP-PA14).